Here is a 916-residue protein sequence, read N- to C-terminus: Beta-scruin (916 aa).

Kelch repeat units lie at residues alanine 82–glycine 133, lysine 134–glutamate 187, arginine 188–glycine 235, isoleucine 237–lysine 289, isoleucine 291–threonine 341, and glutamine 342–valine 390. The interval serine 393–arginine 426 is disordered. Positions threonine 414–alanine 425 are enriched in basic and acidic residues. 6 Kelch repeats span residues valine 586 to glycine 637, alanine 638 to aspartate 691, serine 692 to glycine 739, leucine 741 to aspartate 793, isoleucine 795 to serine 847, and leucine 849 to proline 896.

In terms of tissue distribution, sperm.

Its function is as follows. May have an enzymatic role. Found the acrosomal vesicle at the anterior of sperm but not in the acrosomal process. The sequence is that of Beta-scruin from Limulus polyphemus (Atlantic horseshoe crab).